The primary structure comprises 190 residues: Potassium-transporting ATPase KdpC subunit (190 aa).

A helical membrane pass occupies residues 10-30 (TFLFLLLITGGVYPLLTTALG).

The protein belongs to the KdpC family. As to quaternary structure, the system is composed of three essential subunits: KdpA, KdpB and KdpC.

It is found in the cell inner membrane. In terms of biological role, part of the high-affinity ATP-driven potassium transport (or Kdp) system, which catalyzes the hydrolysis of ATP coupled with the electrogenic transport of potassium into the cytoplasm. This subunit acts as a catalytic chaperone that increases the ATP-binding affinity of the ATP-hydrolyzing subunit KdpB by the formation of a transient KdpB/KdpC/ATP ternary complex. This Escherichia coli O81 (strain ED1a) protein is Potassium-transporting ATPase KdpC subunit.